A 167-amino-acid polypeptide reads, in one-letter code: Small ribosomal subunit protein uS5 (167 aa).

The 64-residue stretch at 11-74 folds into the S5 DRBM domain; sequence LQEKLIAVNR…EKARRAMINV (64 aa).

Belongs to the universal ribosomal protein uS5 family. Part of the 30S ribosomal subunit. Contacts proteins S4 and S8.

In terms of biological role, with S4 and S12 plays an important role in translational accuracy. Its function is as follows. Located at the back of the 30S subunit body where it stabilizes the conformation of the head with respect to the body. In Yersinia pseudotuberculosis serotype O:1b (strain IP 31758), this protein is Small ribosomal subunit protein uS5.